Here is a 447-residue protein sequence, read N- to C-terminus: UDP-N-acetyl-alpha-D-muramoyl-L-alanyl-L-glutamate epimerase (447 aa).

Belongs to the MurL family.

The catalysed reaction is UDP-N-acetyl-alpha-D-muramoyl-L-alanyl-L-glutamate + ATP + H2O = UDP-N-acetyl-alpha-D-muramoyl-L-alanyl-D-glutamate + AMP + diphosphate + H(+). The protein operates within cell wall biogenesis; peptidoglycan biosynthesis. Functionally, cell wall formation. Catalyzes epimerization of the terminal L-glutamate in UDP-N-acetyl-alpha-D-muramoyl-L-alanyl-L-glutamate. This is UDP-N-acetyl-alpha-D-muramoyl-L-alanyl-L-glutamate epimerase from Micromonospora sp. (strain ATCC 39149 / NRRL 15099 / SCC 1413).